Consider the following 136-residue polypeptide: Nucleoside diphosphate kinase (136 aa).

Residues lysine 10, phenylalanine 58, arginine 86, threonine 92, arginine 104, and asparagine 114 each coordinate ATP. Histidine 117 serves as the catalytic Pros-phosphohistidine intermediate.

Belongs to the NDK family. Homotetramer. Requires Mg(2+) as cofactor.

The protein localises to the cytoplasm. The catalysed reaction is a 2'-deoxyribonucleoside 5'-diphosphate + ATP = a 2'-deoxyribonucleoside 5'-triphosphate + ADP. It catalyses the reaction a ribonucleoside 5'-diphosphate + ATP = a ribonucleoside 5'-triphosphate + ADP. Major role in the synthesis of nucleoside triphosphates other than ATP. The ATP gamma phosphate is transferred to the NDP beta phosphate via a ping-pong mechanism, using a phosphorylated active-site intermediate. The sequence is that of Nucleoside diphosphate kinase from Mycobacterium marinum (strain ATCC BAA-535 / M).